The following is a 286-amino-acid chain: Apoptosis inhibitor 1 (286 aa).

2 BIR repeats span residues 29-96 (LIER…CAYA) and 131-199 (LQSR…CYFV). Residues Cys-169, Cys-172, His-189, and Cys-196 each coordinate Zn(2+). An RING-type zinc finger spans residues 238 to 274 (CKVCLERQRDAVLMPCRHFCVCVQCYFGLDQKCPTCR).

Acts by blocking cellular apoptosis early in infection. Later, stimulates caspase-3-like protease activity and induces apoptosis, probably to favor the release of occluded virions. This is Apoptosis inhibitor 1 (IAP1) from Lepidoptera (butterflies and moths).